A 203-amino-acid polypeptide reads, in one-letter code: Glycerol-3-phosphate acyltransferase (203 aa).

The next 6 membrane-spanning stretches (helical) occupy residues 3–23 (ILLATVAAYLIGSVSFAVVVS), 51–71 (KAAILTLVGDAFKGWLAVWLV), 74–94 (FGIGGEIGVALAAIAVFLGHL), 116–136 (AVHPVLGLATALTWLIVAFFF), 140–160 (SLAALVAAVFAPIFDVFLFGT), and 164–178 (PVAWAVLAMSVLLIW).

The protein belongs to the PlsY family. In terms of assembly, probably interacts with PlsX.

It is found in the cell inner membrane. The catalysed reaction is an acyl phosphate + sn-glycerol 3-phosphate = a 1-acyl-sn-glycero-3-phosphate + phosphate. It participates in lipid metabolism; phospholipid metabolism. Its function is as follows. Catalyzes the transfer of an acyl group from acyl-phosphate (acyl-PO(4)) to glycerol-3-phosphate (G3P) to form lysophosphatidic acid (LPA). This enzyme utilizes acyl-phosphate as fatty acyl donor, but not acyl-CoA or acyl-ACP. This is Glycerol-3-phosphate acyltransferase from Burkholderia pseudomallei (strain K96243).